Reading from the N-terminus, the 184-residue chain is ATP synthase subunit b, chloroplastic (184 aa).

Residues 31 to 53 (LINLGIVISLLIYFGKGVLSNLL) traverse the membrane as a helical segment.

The protein belongs to the ATPase B chain family. In terms of assembly, F-type ATPases have 2 components, F(1) - the catalytic core - and F(0) - the membrane proton channel. F(1) has five subunits: alpha(3), beta(3), gamma(1), delta(1), epsilon(1). F(0) has four main subunits: a(1), b(1), b'(1) and c(10-14). The alpha and beta chains form an alternating ring which encloses part of the gamma chain. F(1) is attached to F(0) by a central stalk formed by the gamma and epsilon chains, while a peripheral stalk is formed by the delta, b and b' chains.

The protein localises to the plastid. Its subcellular location is the chloroplast thylakoid membrane. Its function is as follows. F(1)F(0) ATP synthase produces ATP from ADP in the presence of a proton or sodium gradient. F-type ATPases consist of two structural domains, F(1) containing the extramembraneous catalytic core and F(0) containing the membrane proton channel, linked together by a central stalk and a peripheral stalk. During catalysis, ATP synthesis in the catalytic domain of F(1) is coupled via a rotary mechanism of the central stalk subunits to proton translocation. Component of the F(0) channel, it forms part of the peripheral stalk, linking F(1) to F(0). The protein is ATP synthase subunit b, chloroplastic of Aneura mirabilis (Parasitic liverwort).